A 505-amino-acid polypeptide reads, in one-letter code: MDLLLVEKTLLALFAAIIASIFISKLRGKRFKLPPGPVPVPIFGNWLQVGDDLNHRNLTDLAKKFGEIFLLRMGQRNLVVVSSPNLAKEVLHTQGVEFGSRTRNVVFDIFTGKGQDMVFTVYGEHWRKMRRIMTVPFFTNKVVQQYRTGWEAEAAAVVDDVKKNPKAATEGVVIRKRLQLMMYNNMFRIMFDRRFESEDDPLFVKLKMLNGERSRLAQSFEYNYGDFIPILRPFLKGYLKLCKEVKEKRFQLFKDYFVDERKKLGSTKSMDNNQLKCAIDHILDAKDKGEINEDNVLYIVENINVAAIETTLWSIEWAIAELVNHPEIQAKLRHELVSQLGPGVQVTEPDLHKLPYLQAVIKETLRLRMAIPLLVPHMNLHDAKLGGYDIPAESKILVNAWWLANNPDQWKKPEEFRPERFLEEESKVEANGNDFRYLPFGVGRRSCPGIILALPILGITIGRLVQNFELLPPPGQDKVDTTEKGGQFSLHILKHSTIVAKPRVL.

The helical transmembrane segment at 3–23 threads the bilayer; sequence LLLVEKTLLALFAAIIASIFI. Residues 213–218 and alanine 306 each bind (E)-cinnamate; that span reads RSRLAQ. Cysteine 447 serves as a coordination point for heme.

Belongs to the cytochrome P450 family. Heme is required as a cofactor.

It localises to the membrane. The catalysed reaction is (E)-cinnamate + reduced [NADPH--hemoprotein reductase] + O2 = (E)-4-coumarate + oxidized [NADPH--hemoprotein reductase] + H2O + H(+). It participates in phenylpropanoid metabolism; trans-4-coumarate biosynthesis; trans-4-coumarate from trans-cinnamate: step 1/1. Its function is as follows. Catalyzes the first oxidative step of the phenylpropanoid pathway in higher plants by transforming trans-cinnamate into p-coumarate. The compounds formed by this pathway are essential components for lignification, pollination, and defense against ultraviolet light, predators and pathogens. This Zinnia elegans (Garden zinnia) protein is Trans-cinnamate 4-monooxygenase (CYP73A12).